The sequence spans 201 residues: Cutinase (201 aa).

Residues 1-20 (MKTSAQQLLSLLLLPLSAIA) form the signal peptide. A disulfide bond links cysteine 31 and cysteine 105. The active-site Nucleophile is the serine 116. A disulfide bond links cysteine 164 and cysteine 171. Aspartate 168 is an active-site residue. The active-site Proton donor/acceptor is histidine 181.

The protein belongs to the cutinase family. Post-translationally, the 2 disulfide bonds play a critical role in holding the catalytic residues in juxta-position; reduction of the disulfide bridges results in the complete inactivation of the enzyme.

Its subcellular location is the secreted. The catalysed reaction is cutin + H2O = cutin monomers.. Its function is as follows. Catalyzes the hydrolysis of complex carboxylic polyesters found in the cell wall of plants. Degrades cutin, a macromolecule that forms the structure of the plant cuticle. Allows pathogenic fungi to penetrate through the cuticular barrier into the host plant during the initial stage of fungal infection. The polypeptide is Cutinase (CUT1) (Monilinia fructicola (Brown rot fungus)).